The following is a 651-amino-acid chain: Acetyl-coenzyme A synthetase (651 aa).

CoA-binding positions include 191 to 194 (RGGK), T311, and N335. ATP is bound by residues 387-389 (GEP), 411-416 (DTWWQT), D500, and R515. S523 contributes to the CoA binding site. R526 is a binding site for ATP. 3 residues coordinate Mg(2+): V537, H539, and V542. Residue R584 participates in CoA binding. K609 is modified (N6-acetyllysine).

This sequence belongs to the ATP-dependent AMP-binding enzyme family. The cofactor is Mg(2+). Post-translationally, acetylated. Deacetylation by the SIR2-homolog deacetylase activates the enzyme.

It carries out the reaction acetate + ATP + CoA = acetyl-CoA + AMP + diphosphate. Its function is as follows. Catalyzes the conversion of acetate into acetyl-CoA (AcCoA), an essential intermediate at the junction of anabolic and catabolic pathways. AcsA undergoes a two-step reaction. In the first half reaction, AcsA combines acetate with ATP to form acetyl-adenylate (AcAMP) intermediate. In the second half reaction, it can then transfer the acetyl group from AcAMP to the sulfhydryl group of CoA, forming the product AcCoA. This Pseudomonas savastanoi pv. phaseolicola (strain 1448A / Race 6) (Pseudomonas syringae pv. phaseolicola (strain 1448A / Race 6)) protein is Acetyl-coenzyme A synthetase.